Here is a 196-residue protein sequence, read N- to C-terminus: Probable malonic semialdehyde reductase RutE (196 aa).

The protein belongs to the nitroreductase family. HadB/RutE subfamily. FMN serves as cofactor.

It carries out the reaction 3-hydroxypropanoate + NADP(+) = 3-oxopropanoate + NADPH + H(+). Its function is as follows. May reduce toxic product malonic semialdehyde to 3-hydroxypropionic acid, which is excreted. The protein is Probable malonic semialdehyde reductase RutE of Shigella flexneri serotype 5b (strain 8401).